A 248-amino-acid polypeptide reads, in one-letter code: Adenosylcobinamide-GDP ribazoletransferase (248 aa).

Transmembrane regions (helical) follow at residues 36–56 (FFLPVVAFIIGGMEFLIYLAL), 59–79 (FLPPNVIIVLLILFTAMITGG), 114–134 (GTIALIIDLLLKYQLLYSLVL), 137–157 (YSIAIVLAPIIGRISILFLCL), 170–190 (IFIGNMSKPIIFFITTIVLAL), and 199–219 (ATIIPFIGVLLITYLLYLLCL).

It belongs to the CobS family. The cofactor is Mg(2+).

Its subcellular location is the cell membrane. The catalysed reaction is alpha-ribazole + adenosylcob(III)inamide-GDP = adenosylcob(III)alamin + GMP + H(+). The enzyme catalyses alpha-ribazole 5'-phosphate + adenosylcob(III)inamide-GDP = adenosylcob(III)alamin 5'-phosphate + GMP + H(+). It functions in the pathway cofactor biosynthesis; adenosylcobalamin biosynthesis; adenosylcobalamin from cob(II)yrinate a,c-diamide: step 7/7. Functionally, joins adenosylcobinamide-GDP and alpha-ribazole to generate adenosylcobalamin (Ado-cobalamin). Also synthesizes adenosylcobalamin 5'-phosphate from adenosylcobinamide-GDP and alpha-ribazole 5'-phosphate. This chain is Adenosylcobinamide-GDP ribazoletransferase, found in Clostridium botulinum (strain Okra / Type B1).